We begin with the raw amino-acid sequence, 300 residues long: HTH-type transcriptional activator NahR (300 aa).

Positions 6 to 63 constitute an HTH lysR-type domain; it reads LDLNLLVVFNQLLVDRRVSITAENLGLTQPAVSNALKRLRTSLQDPLFVRTHQGMEPT. The H-T-H motif DNA-binding region spans 23–42; it reads VSITAENLGLTQPAVSNALK.

Belongs to the LysR transcriptional regulatory family.

It localises to the cytoplasm. In terms of biological role, regulates the expression of the naphthalene (nahA-F) and salicylate (nahG-M) metabolism genes. This is HTH-type transcriptional activator NahR (nahR) from Pseudomonas putida (Arthrobacter siderocapsulatus).